The primary structure comprises 51 residues: Sperm protamine P1 (51 aa).

This sequence belongs to the protamine P1 family. Cross-linked by interchain disulfide bonds around the DNA-helix. As to expression, testis.

It localises to the nucleus. It is found in the chromosome. Functionally, protamines substitute for histones in the chromatin of sperm during the haploid phase of spermatogenesis. They compact sperm DNA into a highly condensed, stable and inactive complex. The sequence is that of Sperm protamine P1 (PRM1) from Pongo pygmaeus (Bornean orangutan).